Here is a 639-residue protein sequence, read N- to C-terminus: DNA primase (639 aa).

The CHC2-type zinc finger occupies 41–65; it reads CPFHNEKSPSFHVRPNHGHFHCFGC. The region spanning 262-348 is the Toprim domain; the sequence is HQAVVVEGYT…AGQSFVAVAP (87 aa). E268, D319, and D321 together coordinate Mg(2+). The disordered stretch occupies residues 460–479; that stretch reads RAAQRPTAGPPTELAVRPDP.

The protein belongs to the DnaG primase family. In terms of assembly, monomer. Interacts with DnaB. Zn(2+) serves as cofactor. Requires Mg(2+) as cofactor.

The enzyme catalyses ssDNA + n NTP = ssDNA/pppN(pN)n-1 hybrid + (n-1) diphosphate.. Functionally, RNA polymerase that catalyzes the synthesis of short RNA molecules used as primers for DNA polymerase during DNA replication. This Mycobacterium bovis (strain ATCC BAA-935 / AF2122/97) protein is DNA primase.